A 100-amino-acid polypeptide reads, in one-letter code: Large ribosomal subunit protein uL23 (100 aa).

Belongs to the universal ribosomal protein uL23 family. In terms of assembly, part of the 50S ribosomal subunit. Contacts protein L29, and trigger factor when it is bound to the ribosome.

Its function is as follows. One of the early assembly proteins it binds 23S rRNA. One of the proteins that surrounds the polypeptide exit tunnel on the outside of the ribosome. Forms the main docking site for trigger factor binding to the ribosome. The polypeptide is Large ribosomal subunit protein uL23 (Buchnera aphidicola subsp. Schizaphis graminum (strain Sg)).